A 417-amino-acid chain; its full sequence is Mitochondrial tRNA-specific 2-thiouridylase 1 (417 aa).

ATP-binding positions include 32-39 and Met-58; that span reads AMSSGVDS. Positions 122–124 are interaction with target base in tRNA; that stretch reads NPD. The active-site Nucleophile is Cys-127. Cysteines 127 and 229 form a disulfide. Position 154 (Gly-154) interacts with ATP. The interaction with tRNA stretch occupies residues 179 to 181; it reads KDQ. Cys-229 acts as the Cysteine persulfide intermediate in catalysis. The interaction with tRNA stretch occupies residues 354 to 355; that stretch reads RS.

It belongs to the MnmA/TRMU family.

The protein localises to the mitochondrion. The enzyme catalyses 5-taurinomethyluridine(34) in tRNA + S-sulfanyl-L-cysteinyl-[protein] + AH2 + ATP = 5-taurinomethyl-2-thiouridine(34) in tRNA + L-cysteinyl-[protein] + A + AMP + diphosphate + H(+). In terms of biological role, catalyzes the 2-thiolation of uridine at the wobble position (U34) of mitochondrial tRNA(Lys), tRNA(Glu) and tRNA(Gln). Required for the formation of 5-taurinomethyl-2-thiouridine (tm5s2U) of mitochondrial tRNA(Lys), tRNA(Glu), and tRNA(Gln) at the wobble position. ATP is required to activate the C2 atom of the wobble base. The sequence is that of Mitochondrial tRNA-specific 2-thiouridylase 1 (SLM3) from Saccharomyces cerevisiae (strain ATCC 204508 / S288c) (Baker's yeast).